Here is a 226-residue protein sequence, read N- to C-terminus: Cytidylate kinase (226 aa).

ATP is bound at residue 10–18; the sequence is GPASSGKST.

Belongs to the cytidylate kinase family. Type 1 subfamily.

It is found in the cytoplasm. It carries out the reaction CMP + ATP = CDP + ADP. The enzyme catalyses dCMP + ATP = dCDP + ADP. This chain is Cytidylate kinase, found in Streptococcus pyogenes serotype M28 (strain MGAS6180).